A 285-amino-acid polypeptide reads, in one-letter code: 2,3,4,5-tetrahydropyridine-2,6-dicarboxylate N-succinyltransferase (285 aa).

2 residues coordinate substrate: Arg-111 and Asp-148.

It belongs to the transferase hexapeptide repeat family. In terms of assembly, homotrimer.

The protein resides in the cytoplasm. The enzyme catalyses (S)-2,3,4,5-tetrahydrodipicolinate + succinyl-CoA + H2O = (S)-2-succinylamino-6-oxoheptanedioate + CoA. The protein operates within amino-acid biosynthesis; L-lysine biosynthesis via DAP pathway; LL-2,6-diaminopimelate from (S)-tetrahydrodipicolinate (succinylase route): step 1/3. The polypeptide is 2,3,4,5-tetrahydropyridine-2,6-dicarboxylate N-succinyltransferase (Rhizobium rhizogenes (strain K84 / ATCC BAA-868) (Agrobacterium radiobacter)).